Here is a 293-residue protein sequence, read N- to C-terminus: 4-diphosphocytidyl-2-C-methyl-D-erythritol kinase (293 aa).

Residue lysine 10 is part of the active site. 94-104 serves as a coordination point for ATP; it reads PVSAGLAGGSS. Aspartate 136 is a catalytic residue.

The protein belongs to the GHMP kinase family. IspE subfamily.

The enzyme catalyses 4-CDP-2-C-methyl-D-erythritol + ATP = 4-CDP-2-C-methyl-D-erythritol 2-phosphate + ADP + H(+). It functions in the pathway isoprenoid biosynthesis; isopentenyl diphosphate biosynthesis via DXP pathway; isopentenyl diphosphate from 1-deoxy-D-xylulose 5-phosphate: step 3/6. Catalyzes the phosphorylation of the position 2 hydroxy group of 4-diphosphocytidyl-2C-methyl-D-erythritol. The polypeptide is 4-diphosphocytidyl-2-C-methyl-D-erythritol kinase (Listeria monocytogenes serotype 4b (strain CLIP80459)).